Consider the following 193-residue polypeptide: Large ribosomal subunit protein eL18 (193 aa).

A disordered region spans residues 158 to 193; that stretch reads HFGAAGVPGSHAKPFTSNRGKERQRSSARRRAFRHK. The segment covering 183 to 193 has biased composition (basic residues); sequence SSARRRAFRHK.

The protein belongs to the eukaryotic ribosomal protein eL18 family.

Its subcellular location is the cytoplasm. The chain is Large ribosomal subunit protein eL18 (RPL18) from Trypanosoma cruzi (strain CL Brener).